We begin with the raw amino-acid sequence, 120 residues long: Insoluble matrix shell protein 2 (120 aa).

Positions 1-20 (MHQSSLGVLVLFSLIYLCIS) are cleaved as a signal peptide.

Component of the acid-insoluble organic matrix of the calcified shell.

Its subcellular location is the secreted. The polypeptide is Insoluble matrix shell protein 2 (Ruditapes philippinarum (Japanese carpet shell)).